The sequence spans 302 residues: UDP-N-acetylenolpyruvoylglucosamine reductase (302 aa).

In terms of domain architecture, FAD-binding PCMH-type spans 27–192 (KTGGPADYVA…VSVTFGLKPG (166 aa)). Residue Arg-171 is part of the active site. The active-site Proton donor is the Ser-221. Glu-291 is an active-site residue.

This sequence belongs to the MurB family. FAD is required as a cofactor.

The protein localises to the cytoplasm. The catalysed reaction is UDP-N-acetyl-alpha-D-muramate + NADP(+) = UDP-N-acetyl-3-O-(1-carboxyvinyl)-alpha-D-glucosamine + NADPH + H(+). It functions in the pathway cell wall biogenesis; peptidoglycan biosynthesis. Cell wall formation. This chain is UDP-N-acetylenolpyruvoylglucosamine reductase, found in Lactiplantibacillus plantarum (strain ATCC BAA-793 / NCIMB 8826 / WCFS1) (Lactobacillus plantarum).